Consider the following 441-residue polypeptide: Alpha-methylserine aldolase (441 aa).

The residue at position 256 (K256) is an N6-(pyridoxal phosphate)lysine.

This sequence belongs to the SHMT family. Alpha-methylserine aldolase subfamily. As to quaternary structure, homodimer. It depends on pyridoxal 5'-phosphate as a cofactor.

The catalysed reaction is 2-methyl-L-serine = formaldehyde + L-alanine. Catalyzes the reversible interconversion of alpha-methyl-L-serine to L-alanine and formaldehyde. This is Alpha-methylserine aldolase from Variovorax paradoxus.